Reading from the N-terminus, the 469-residue chain is ATP-dependent protease ATPase subunit HslU (469 aa).

ATP-binding positions include Ile-24, 66–71 (GVGKTE), Asp-282, Glu-347, and Arg-419.

The protein belongs to the ClpX chaperone family. HslU subfamily. As to quaternary structure, a double ring-shaped homohexamer of HslV is capped on each side by a ring-shaped HslU homohexamer. The assembly of the HslU/HslV complex is dependent on binding of ATP.

Its subcellular location is the cytoplasm. In terms of biological role, ATPase subunit of a proteasome-like degradation complex; this subunit has chaperone activity. The binding of ATP and its subsequent hydrolysis by HslU are essential for unfolding of protein substrates subsequently hydrolyzed by HslV. HslU recognizes the N-terminal part of its protein substrates and unfolds these before they are guided to HslV for hydrolysis. This is ATP-dependent protease ATPase subunit HslU from Listeria monocytogenes serotype 4b (strain CLIP80459).